Here is a 633-residue protein sequence, read N- to C-terminus: Mitochondrial Rho GTPase 1 (633 aa).

Residues 1–170 (MATVRICVCG…FFLCQKAVTH (170 aa)) form the Miro 1 domain. The Cytoplasmic portion of the chain corresponds to 1–603 (MATVRICVCG…PRSEEDVEGK (603 aa)). Residues 10–17 (GDEGTGKS), 59–63 (DTSAL), and 115–118 (NKSD) each bind GTP. 2 consecutive EF-hand domains span residues 186–221 (AAVA…CFEK) and 306–341 (EGYR…TPGL). Residues D199, D201, D203, Y205, E210, D319, D321, D323, and E330 each contribute to the Ca(2+) site. Residues 398–418 (NPSTTAALKVTRPRKRRKRPG) form a disordered region. Positions 408-418 (TRPRKRRKRPG) are enriched in basic residues. The Miro 2 domain maps to 422–588 (RNVVLGHVLG…FVHIAEAAME (167 aa)). GTP contacts are provided by residues 431-438 (GPPGSGKS), 467-471 (ELPGG), and 537-540 (LKAD). Residues 604–624 (WMAWGIALGAVVCAGAAAVMI) form a helical; Anchor for type IV membrane protein membrane-spanning segment. Topologically, residues 625–633 (WRRVSGSGT) are mitochondrial intermembrane.

This sequence belongs to the mitochondrial Rho GTPase family.

The protein localises to the mitochondrion outer membrane. Mitochondrial GTPase involved in mitochondrial trafficking. Probably involved in control of anterograde transport of mitochondria and their subcellular distribution. In Aspergillus oryzae (strain ATCC 42149 / RIB 40) (Yellow koji mold), this protein is Mitochondrial Rho GTPase 1 (gem1).